We begin with the raw amino-acid sequence, 491 residues long: UDP-N-acetylmuramate--L-alanine ligase (491 aa).

Residue 126–132 (GTHGKTT) coordinates ATP.

Belongs to the MurCDEF family.

The protein resides in the cytoplasm. The enzyme catalyses UDP-N-acetyl-alpha-D-muramate + L-alanine + ATP = UDP-N-acetyl-alpha-D-muramoyl-L-alanine + ADP + phosphate + H(+). The protein operates within cell wall biogenesis; peptidoglycan biosynthesis. Cell wall formation. The protein is UDP-N-acetylmuramate--L-alanine ligase of Photorhabdus laumondii subsp. laumondii (strain DSM 15139 / CIP 105565 / TT01) (Photorhabdus luminescens subsp. laumondii).